A 657-amino-acid chain; its full sequence is Protein translocase subunit SecA 2 (657 aa).

ATP-binding positions include Gln93, Gly111–Thr115, and Asp531.

Belongs to the SecA family. In terms of assembly, monomer and homodimer. Part of the essential Sec protein translocation apparatus which comprises SecA, SecYEG and auxiliary proteins SecDF. Other proteins may also be involved.

The protein resides in the cell inner membrane. It is found in the cytoplasm. It carries out the reaction ATP + H2O + cellular proteinSide 1 = ADP + phosphate + cellular proteinSide 2.. Part of the Sec protein translocase complex. Interacts with the SecYEG preprotein conducting channel. Has a central role in coupling the hydrolysis of ATP to the transfer of proteins into and across the cell membrane, serving as an ATP-driven molecular motor driving the stepwise translocation of polypeptide chains across the membrane. The chain is Protein translocase subunit SecA 2 from Rhodopirellula baltica (strain DSM 10527 / NCIMB 13988 / SH1).